Consider the following 639-residue polypeptide: Probable potassium transport system protein Kup 1 (639 aa).

Residues 1–16 (MALANTGSEAEPVEQS) show a composition bias toward polar residues. The segment at 1 to 21 (MALANTGSEAEPVEQSSHPEI) is disordered. Transmembrane regions (helical) follow at residues 29 to 49 (LMLGALGVVYGDIGTSPIYAF), 67 to 87 (ILGVLSLIIWSLTIIVTIKYI), 117 to 137 (AVILGIGIVGASLFFGDAVIT), 154 to 174 (PTFQPYVVPLTLVILAVVFAV), 182 to 202 (VGLVFGPVTAVWFLAIGLSGL), 220 to 240 (IVAFLIHSPDVAFVTIGAIFL), 260 to 280 (IVLAWLSIVFPCLLLNYAGQG), 302 to 322 (ALIPMVVLATAATVIASQAVI), 354 to 374 (IYMPRVNLLLALVVMMLVVGF), 383 to 403 (AYGISVTGNMLVTTVLLYVVM), 411 to 431 (LWVAISLTVLFAFIDIGFFAS), and 436 to 456 (VFEGGWASLLVAFTIVLGMWT).

The protein belongs to the HAK/KUP transporter (TC 2.A.72) family.

Its subcellular location is the cell inner membrane. It catalyses the reaction K(+)(in) + H(+)(in) = K(+)(out) + H(+)(out). In terms of biological role, transport of potassium into the cell. Likely operates as a K(+):H(+) symporter. In Mesorhizobium japonicum (strain LMG 29417 / CECT 9101 / MAFF 303099) (Mesorhizobium loti (strain MAFF 303099)), this protein is Probable potassium transport system protein Kup 1.